Reading from the N-terminus, the 683-residue chain is MSTQNGMYYSLLEWFKTLNLNAPHANAEELADGVALAQALNQFAPESFSDSWLSKIKSSAAGSNWRLRMSNLKKVVEGVYEYYSDVLNYTLQHDFVKPDVQAIAEKCDLTELERLLQLVLGCAVNCAKKQSYICEIMCLEEELQANIMRALQELETSTRQTTEGGVVSSLSRNSLSGMLDGNAKALQSQMTEERDAMAQKCFETEKKMLLLIDEKTNLQQELQKIQQEFARLEHNTIGDDGVSLGPIQAGSVRYNELRRQLELVKEELLQSEGAREDLKIKAQQQETEMLHMQQRIDELMKSTAVLITLKDEVDVLRESTDKLKVCEAQLETYKKKLEEYNDLKKHVKMLEERSADYVQQNAQFEEDAKRYANTKGQIELFKKEIQDLHTKLDNESSKNVKLEFDNKNLDSKNLALQREKDNLLKERDNLREAFDELKCGQLTTNSGSLTGTTMSRELQPPAMMDKIQRLEAENKALREGQGGQTALAQLLDDANKRCENLREQMKTANERILSLSHASQSDDPILKENEFSKQIKQLMELNEQKTLQIEEFATQNSTMQCKITQLESSLNTREQEVMAYEVKYRKCVERAKEVIKNIDPRIASVLEANALEKSVDVIEEESKTKMSGMEEQLMATAFYRLGVNAQRDAVDSKLALLMGSGQTFLARQRQSAPRKSLTTMKSK.

In terms of domain architecture, Calponin-homology (CH) spans 5–123; it reads NGMYYSLLEW…RLLQLVLGCA (119 aa). Coiled coils occupy residues 135-440 and 484-594; these read EIMC…LKCG and QTAL…AKEV.

Belongs to the hook family. Homodimer. Interacts with microtubules via its N-terminus.

The protein resides in the cytoplasm. Its subcellular location is the cytoskeleton. It localises to the endosome. It is found in the synapse. In terms of biological role, involved in endocytic trafficking by stabilizing organelles of the endocytic pathway. Probably acts as a cytoskeletal linker protein required to tether endosome vesicles to the cytoskeleton. Involved in modulation of endocytosis at stages required for down-regulation of membrane proteins that control synapse size. Not involved in synaptic vesicle recycling. Required in R7 cells for boss endocytosis into multivesicular bodies (MVBs). Has a role in regulating adult longevity. This Drosophila grimshawi (Hawaiian fruit fly) protein is Protein hook.